We begin with the raw amino-acid sequence, 181 residues long: Peptidyl-prolyl cis-trans isomerase H (181 aa).

The region spanning 17 to 180 is the PPIase cyclophilin-type domain; sequence FFDIALGGVP…QDVIITQCGE (164 aa).

The protein belongs to the cyclophilin-type PPIase family. PPIase H subfamily.

It localises to the nucleus. It carries out the reaction [protein]-peptidylproline (omega=180) = [protein]-peptidylproline (omega=0). PPIases accelerate the folding of proteins. It catalyzes the cis-trans isomerization of proline imidic peptide bonds in oligopeptides. In Aspergillus fumigatus (strain ATCC MYA-4609 / CBS 101355 / FGSC A1100 / Af293) (Neosartorya fumigata), this protein is Peptidyl-prolyl cis-trans isomerase H (cyp3).